Consider the following 488-residue polypeptide: MKYSDLRDFIAQLESRELLKRIDYPVSPHLEMTVVSDKVLRSGGPALLFTNTPNYDMPVLTNLFGTVERVALGMGEESIVALREIGKLLAALKEPDPPKGFKDAFSKLPLLKQALNMAPKYVSGAECQTHVWEKDEVDLTLLPIQTCWPGDVAPLITWGLVTTRGPHQSRENMGIYRQQLLSKNKLIMRWLSHRGGALDYQAWQQEYPKERFPVAVTLGADPATILAAVTPVPDTLSEYAFAGLLRGQRTRLTRCIGNDLHVPASAEIVLEGYLEPGNEAPEGPYGDHTGYYNEVQSFPVFTVERITHRDKPIYHSTYTGRPPDEPAILGVALNEVFIPLLQKQFPEIVDFYLPPEGCSYRLAVVTIKKQYPGHAKRIMMAVWSFLRQFMYTKFVIVCDDDVDARNWQDVIWAMTTRMDPSRDTVMVENTPIDYLDFASPVSGLGSKMGMDATSKWPGETQREWGKPITMDEDVLNRVNGYWSLLGLK.

N172 contacts Mn(2+). Residues 175 to 177, 189 to 191, and 194 to 195 each bind prenylated FMN; these read IYR, RWL, and RG. E238 lines the Mn(2+) pocket. The Proton donor role is filled by D287.

It belongs to the UbiD family. In terms of assembly, homohexamer. Requires prenylated FMN as cofactor. The cofactor is Mn(2+).

The protein localises to the cell membrane. It catalyses the reaction a 4-hydroxy-3-(all-trans-polyprenyl)benzoate + H(+) = a 2-(all-trans-polyprenyl)phenol + CO2. It participates in cofactor biosynthesis; ubiquinone biosynthesis. Catalyzes the decarboxylation of 3-octaprenyl-4-hydroxy benzoate to 2-octaprenylphenol, an intermediate step in ubiquinone biosynthesis. This chain is 3-octaprenyl-4-hydroxybenzoate carboxy-lyase, found in Legionella pneumophila (strain Lens).